Reading from the N-terminus, the 488-residue chain is Cysteine--tRNA ligase (488 aa).

C40 contributes to the Zn(2+) binding site. The short motif at 42-52 (MTVYDYCHIGH) is the 'HIGH' region element. Zn(2+) contacts are provided by C221, H246, and E250. Residues 278–282 (KMSKS) carry the 'KMSKS' region motif. An ATP-binding site is contributed by K281.

Belongs to the class-I aminoacyl-tRNA synthetase family. As to quaternary structure, monomer. Zn(2+) serves as cofactor.

Its subcellular location is the cytoplasm. It carries out the reaction tRNA(Cys) + L-cysteine + ATP = L-cysteinyl-tRNA(Cys) + AMP + diphosphate. In Psychrobacter cryohalolentis (strain ATCC BAA-1226 / DSM 17306 / VKM B-2378 / K5), this protein is Cysteine--tRNA ligase.